We begin with the raw amino-acid sequence, 479 residues long: uncharacterized protein (479 aa).

Positions 180–203 (LGGEHSDSTNTELANPSSTTTRIT) are disordered. A compositionally biased stretch (polar residues) spans 187–202 (STNTELANPSSTTTRI). Residues 240 to 462 (PGTTPEVVSY…LKPLVDAGYS (223 aa)) form the PE-PPE domain.

The protein belongs to the mycobacterial PPE family.

This is an uncharacterized protein from Mycobacterium tuberculosis (strain CDC 1551 / Oshkosh).